Reading from the N-terminus, the 417-residue chain is UDP-N-acetylglucosamine 1-carboxyvinyltransferase (417 aa).

22–23 serves as a coordination point for phosphoenolpyruvate; that stretch reads KN. Arg-93 is a binding site for UDP-N-acetyl-alpha-D-glucosamine. Cys-117 serves as the catalytic Proton donor. A 2-(S-cysteinyl)pyruvic acid O-phosphothioketal modification is found at Cys-117. UDP-N-acetyl-alpha-D-glucosamine contacts are provided by residues 122 to 126, Asp-304, and Ile-326; that span reads RPVDQ.

This sequence belongs to the EPSP synthase family. MurA subfamily.

The protein resides in the cytoplasm. The catalysed reaction is phosphoenolpyruvate + UDP-N-acetyl-alpha-D-glucosamine = UDP-N-acetyl-3-O-(1-carboxyvinyl)-alpha-D-glucosamine + phosphate. Its pathway is cell wall biogenesis; peptidoglycan biosynthesis. Cell wall formation. Adds enolpyruvyl to UDP-N-acetylglucosamine. The polypeptide is UDP-N-acetylglucosamine 1-carboxyvinyltransferase (Neisseria meningitidis serogroup C (strain 053442)).